The following is a 70-amino-acid chain: Antimicrobial peptide VpCT1 (70 aa).

A signal peptide spans 1 to 23 (MKNQFAVLLVALVLLQLFSQSEA). Residue leucine 36 is modified to Leucine amide. Residues 37–70 (GKRGLRNFDLEQMDDTYEPELSEADLRYLQDLLR) constitute a propeptide that is removed on maturation.

This sequence belongs to the non-disulfide-bridged peptide (NDBP) superfamily. Short antimicrobial peptide (group 4) family. Expressed by the venom gland.

Its subcellular location is the secreted. It localises to the target cell membrane. Antimicrobial peptide with potent activity against bacteria S.aureus (MIC=4.7 uM) and E.coli (MIC=31.5 uM), and pathogenic yeasts C.albicans (MIC=25 uM) and C.glabrata (MIC=12.5 uM). Is not very effective against P.aeruginosa (MIC=150 and &gt;300 uM). Also provokes moderate hemolysis on human erythrocytes (HC(50)=10.5 uM). In Mesomexovis punctatus (Scorpion), this protein is Antimicrobial peptide VpCT1.